The chain runs to 339 residues: tRNA dimethylallyltransferase (339 aa).

Position 36–43 (36–43 (GPTGSGKT)) interacts with ATP. 38–43 (TGSGKT) lines the substrate pocket. Residues 61 to 64 (DSMQ) form an interaction with substrate tRNA region.

This sequence belongs to the IPP transferase family. In terms of assembly, monomer. Requires Mg(2+) as cofactor.

The enzyme catalyses adenosine(37) in tRNA + dimethylallyl diphosphate = N(6)-dimethylallyladenosine(37) in tRNA + diphosphate. Functionally, catalyzes the transfer of a dimethylallyl group onto the adenine at position 37 in tRNAs that read codons beginning with uridine, leading to the formation of N6-(dimethylallyl)adenosine (i(6)A). The chain is tRNA dimethylallyltransferase from Chlamydia trachomatis serovar L2 (strain ATCC VR-902B / DSM 19102 / 434/Bu).